Consider the following 419-residue polypeptide: L-rhamnose isomerase (419 aa).

Residues H262, D294, and D296 each contribute to the Mn(2+) site.

This sequence belongs to the rhamnose isomerase family. Homotetramer. Requires Mn(2+) as cofactor.

Its subcellular location is the cytoplasm. It carries out the reaction L-rhamnopyranose = L-rhamnulose. It functions in the pathway carbohydrate degradation; L-rhamnose degradation; glycerone phosphate from L-rhamnose: step 1/3. Catalyzes the interconversion of L-rhamnose and L-rhamnulose. The chain is L-rhamnose isomerase from Salmonella paratyphi A (strain AKU_12601).